We begin with the raw amino-acid sequence, 408 residues long: Protein CNPPD1 (408 aa).

The helical transmembrane segment at 233 to 253 (CLLAVAYVSSVALAVASMAVI) threads the bilayer.

Belongs to the CNPPD1 family.

The protein localises to the membrane. In Rattus norvegicus (Rat), this protein is Protein CNPPD1 (Cnppd1).